Here is a 120-residue protein sequence, read N- to C-terminus: Large ribosomal subunit protein uL22 (120 aa).

It belongs to the universal ribosomal protein uL22 family. Part of the 50S ribosomal subunit.

Its function is as follows. This protein binds specifically to 23S rRNA; its binding is stimulated by other ribosomal proteins, e.g. L4, L17, and L20. It is important during the early stages of 50S assembly. It makes multiple contacts with different domains of the 23S rRNA in the assembled 50S subunit and ribosome. Functionally, the globular domain of the protein is located near the polypeptide exit tunnel on the outside of the subunit, while an extended beta-hairpin is found that lines the wall of the exit tunnel in the center of the 70S ribosome. This chain is Large ribosomal subunit protein uL22, found in Corynebacterium glutamicum (strain R).